Reading from the N-terminus, the 290-residue chain is Phosphoribosylaminoimidazole-succinocarboxamide synthase (290 aa).

This sequence belongs to the SAICAR synthetase family.

It carries out the reaction 5-amino-1-(5-phospho-D-ribosyl)imidazole-4-carboxylate + L-aspartate + ATP = (2S)-2-[5-amino-1-(5-phospho-beta-D-ribosyl)imidazole-4-carboxamido]succinate + ADP + phosphate + 2 H(+). The protein operates within purine metabolism; IMP biosynthesis via de novo pathway; 5-amino-1-(5-phospho-D-ribosyl)imidazole-4-carboxamide from 5-amino-1-(5-phospho-D-ribosyl)imidazole-4-carboxylate: step 1/2. In Haemophilus influenzae (strain ATCC 51907 / DSM 11121 / KW20 / Rd), this protein is Phosphoribosylaminoimidazole-succinocarboxamide synthase (purC).